The primary structure comprises 319 residues: Transmembrane and ubiquitin-like domain-containing protein 2 (319 aa).

Residues 36 to 56 form a helical membrane-spanning segment; sequence VMVVAGVVALTLALVLAWLST. 2 disordered regions span residues 88–128 and 145–165; these read VNQG…ARGE and RQAGLGSSRPEAPLGLDDGSC. Over residues 95 to 111 the composition is skewed to basic and acidic residues; that stretch reads PTEHPHPSGGNDDKAEE. The Ubiquitin-like domain maps to 173–246; the sequence is INVRLKFLND…IHCHRSPPGA (74 aa). The next 2 helical transmembrane spans lie at 264–284 and 298–318; these read LGVNVGSLMVPVFVVLLGVVW and ATISLVGVTVFFSILVFGMYG.

The protein resides in the membrane. This is Transmembrane and ubiquitin-like domain-containing protein 2 (Tmub2) from Mus musculus (Mouse).